Here is a 184-residue protein sequence, read N- to C-terminus: uncharacterized protein (184 aa).

The protein to M.tuberculosis Rv0487.

This is an uncharacterized protein from Mycobacterium leprae (strain TN).